A 60-amino-acid polypeptide reads, in one-letter code: MDPCECSKSGTCNCGGSCTCTNCSCTSCKKSCCPCCPSGCTKCASGCVCKGKTCDTSCCQ.

The interval 1–28 (MDPCECSKSGTCNCGGSCTCTNCSCTSC) is beta. Cys4, Cys6, Cys12, Cys14, Cys18, Cys20, Cys23, Cys25, Cys28, Cys32, Cys33, Cys35, Cys36, Cys40, Cys43, Cys47, Cys49, Cys54, Cys58, and Cys59 together coordinate a divalent metal cation. Residues 29–60 (KKSCCPCCPSGCTKCASGCVCKGKTCDTSCCQ) form an alpha region.

It belongs to the metallothionein superfamily. Type 1 family.

Functionally, metallothioneins have a high content of cysteine residues that bind various heavy metals. The protein is Metallothionein B (mtb) of Trematomus bernacchii (Emerald rockcod).